The sequence spans 358 residues: Type II restriction enzyme SacI (358 aa).

The catalysed reaction is Endonucleolytic cleavage of DNA to give specific double-stranded fragments with terminal 5'-phosphates.. Its function is as follows. A subtype P restriction enzyme that recognizes the double-stranded sequence 5'-GAGCTC-3' and cleaves after T-5. The polypeptide is Type II restriction enzyme SacI (Streptomyces achromogenes).